An 89-amino-acid polypeptide reads, in one-letter code: Large ribosomal subunit protein eL34 (89 aa).

The interval 45 to 71 (GIPRGRPVEMRKLPKTKKRPERPMPHL) is disordered.

Belongs to the eukaryotic ribosomal protein eL34 family. As to quaternary structure, part of the 50S ribosomal subunit.

The chain is Large ribosomal subunit protein eL34 from Pyrococcus furiosus (strain ATCC 43587 / DSM 3638 / JCM 8422 / Vc1).